Consider the following 653-residue polypeptide: Chaperone protein DnaK (653 aa).

A Phosphothreonine; by autocatalysis modification is found at T200. A disordered region spans residues 612–653; sequence QGAAGAAGAAGGAGAAAGAEAAGASQQADDVVDAEFKEVKKD. Over residues 627-639 the composition is skewed to low complexity; it reads AAGAEAAGASQQA.

This sequence belongs to the heat shock protein 70 family.

In terms of biological role, acts as a chaperone. The polypeptide is Chaperone protein DnaK (Paraburkholderia phymatum (strain DSM 17167 / CIP 108236 / LMG 21445 / STM815) (Burkholderia phymatum)).